Reading from the N-terminus, the 849-residue chain is Alanine--tRNA ligase (849 aa).

H551, H555, C653, and H657 together coordinate Zn(2+).

The protein belongs to the class-II aminoacyl-tRNA synthetase family. It depends on Zn(2+) as a cofactor.

It localises to the cytoplasm. It catalyses the reaction tRNA(Ala) + L-alanine + ATP = L-alanyl-tRNA(Ala) + AMP + diphosphate. Catalyzes the attachment of alanine to tRNA(Ala) in a two-step reaction: alanine is first activated by ATP to form Ala-AMP and then transferred to the acceptor end of tRNA(Ala). Also edits incorrectly charged Ser-tRNA(Ala) and Gly-tRNA(Ala) via its editing domain. The sequence is that of Alanine--tRNA ligase from Sulfurimonas denitrificans (strain ATCC 33889 / DSM 1251) (Thiomicrospira denitrificans (strain ATCC 33889 / DSM 1251)).